Reading from the N-terminus, the 733-residue chain is Serine/threonine-protein kinase ATG1c (733 aa).

Residues 12 to 269 (YLVGRQIGSG…FEEFFNHPFL (258 aa)) enclose the Protein kinase domain. ATP-binding positions include 18–26 (IGSGSFSVV) and lysine 41. Aspartate 134 serves as the catalytic Proton acceptor. Disordered regions lie at residues 292–363 (SSGS…ELTS) and 379–414 (FETQ…SQDS). The segment covering 329–339 (KKTSSMKSSSG) has biased composition (polar residues). Basic and acidic residues-rich tracts occupy residues 342 to 360 (VDTR…KHTE) and 379 to 393 (FETQ…RREP). The AIM (Atg8-family-interacting motif) signature appears at 419–422 (FVLV). 2 disordered regions span residues 565-596 (GSPS…SHDG) and 713-733 (HRRS…NRQS). The span at 566–577 (SPSQDINKLRSS) shows a compositional bias: polar residues. Residues 579–596 (LKHDTHSSNKVTDLSHDG) show a composition bias toward basic and acidic residues. Over residues 717–733 (SAGQMQGSSLAMMNRQS) the composition is skewed to polar residues.

Belongs to the protein kinase superfamily. Ser/Thr protein kinase family.

It is found in the cytoplasmic vesicle. The protein localises to the autophagosome. In terms of biological role, serine/threonine protein kinase involved in autophagy. The ATG1-ATG13 protein kinase complex regulates downstream events required for autophagosome enclosure and/or vacuolar delivery. The protein is Serine/threonine-protein kinase ATG1c of Arabidopsis thaliana (Mouse-ear cress).